Consider the following 61-residue polypeptide: Small ribosomal subunit protein uS14 (61 aa).

The Zn(2+) site is built by cysteine 24, cysteine 27, cysteine 40, and cysteine 43.

Belongs to the universal ribosomal protein uS14 family. Zinc-binding uS14 subfamily. As to quaternary structure, part of the 30S ribosomal subunit. Contacts proteins S3 and S10. The cofactor is Zn(2+).

Functionally, binds 16S rRNA, required for the assembly of 30S particles and may also be responsible for determining the conformation of the 16S rRNA at the A site. This is Small ribosomal subunit protein uS14 from Thermosipho africanus (strain TCF52B).